The primary structure comprises 157 residues: Transcriptional repressor NrdR (157 aa).

Residues 3–34 (CPFCRHPDSRVIDSRTSDDGLSIRRRRQCPEC) fold into a zinc finger. The region spanning 46–136 (LSVIKRSGVV…VYQAFDSLED (91 aa)) is the ATP-cone domain.

Belongs to the NrdR family. The cofactor is Zn(2+).

Its function is as follows. Negatively regulates transcription of bacterial ribonucleotide reductase nrd genes and operons by binding to NrdR-boxes. The sequence is that of Transcriptional repressor NrdR from Leifsonia xyli subsp. xyli (strain CTCB07).